Consider the following 300-residue polypeptide: Bifunctional protein FolD (300 aa).

NADP(+) is bound by residues 168-170, Ser-193, and Ile-234; that span reads GRS.

It belongs to the tetrahydrofolate dehydrogenase/cyclohydrolase family. In terms of assembly, homodimer.

It catalyses the reaction (6R)-5,10-methylene-5,6,7,8-tetrahydrofolate + NADP(+) = (6R)-5,10-methenyltetrahydrofolate + NADPH. The catalysed reaction is (6R)-5,10-methenyltetrahydrofolate + H2O = (6R)-10-formyltetrahydrofolate + H(+). It functions in the pathway one-carbon metabolism; tetrahydrofolate interconversion. Catalyzes the oxidation of 5,10-methylenetetrahydrofolate to 5,10-methenyltetrahydrofolate and then the hydrolysis of 5,10-methenyltetrahydrofolate to 10-formyltetrahydrofolate. This chain is Bifunctional protein FolD, found in Ehrlichia canis (strain Jake).